We begin with the raw amino-acid sequence, 65 residues long: Large ribosomal subunit protein bL35 (65 aa).

A disordered region spans residues 1-26 (MPKIKTLRSAAKRFKKTESGKFKRKQ).

Belongs to the bacterial ribosomal protein bL35 family.

In Buchnera aphidicola subsp. Baizongia pistaciae (strain Bp), this protein is Large ribosomal subunit protein bL35.